Consider the following 228-residue polypeptide: MAAPSEAPVTRQVSGHAAPAPVPSGPASWQPLAAAVAELPVLDASGRPVLFGELFRERRAIVVFVRHFLCYICKEYVEDLAKIPKSFLQEANVTLIVIGQSSYHHIEPFCKLTGYSHEIYVDPEREIYKRLGMKRGEEIASSGQSPHVKSNILSGSIRSLWRAVTGPLFDFQGDPAQQGGTLILGPGNNIHFIHHDRNRLDHKPINSVLQLVGVQHVDFTSRPSVIHV.

The interval 1–22 (MAAPSEAPVTRQVSGHAAPAPV) is disordered. The segment covering 13 to 22 (VSGHAAPAPV) has biased composition (low complexity).

Belongs to the peroxiredoxin-like PRXL2 family. PRXL2C subfamily.

Its function is as follows. May positively regulate ERK1/2 signaling and AKT1 activation leading to HIF1A up-regulation with an increased expression of glycolysis genes and enhanced glycolysis. The sequence is that of Peroxiredoxin-like 2C (PRXL2C) from Bos taurus (Bovine).